The sequence spans 443 residues: Spermidine hydroxycinnamoyltransferase 1 (443 aa).

Residues His167 and Asp390 each act as proton acceptor in the active site.

Belongs to the plant acyltransferase family.

Its function is as follows. Hydroxycinnamoyl transferase that catalyzes the transfer of an acyl from p-coumaryol-CoA to spermidine, to produce coumaroyl spermidine. Can use feruloyl-CoA as acyl donor. Contributes to the natural variation of spermidine-based phenolamides in rice cultivars. This chain is Spermidine hydroxycinnamoyltransferase 1, found in Oryza sativa subsp. japonica (Rice).